We begin with the raw amino-acid sequence, 693 residues long: MKHSVSFTYGQHQVTLETGEIARQADGAVIVNMDDTIVLVTVVANKTVAEGQDFFPLTVDYQEKNYAAGKIPGGFFKREGRPSEEETLISRLIDRPIRPLFADGFLNEVQIIATVLSYNPEVSPDIPSIIGASAALKLSGLPFNGPIAAARVGYVNDAYVLNPSPKALKNSRLDLVVAGTESAVLMVESEADQLSEAVMLEAVMFGHRQQQVVIKSINELAAQAAKPAWAWQSPARDEQLDTEVKNHFEERLVAAYQIAHKQTRQETVAQIHADAVALLGIQNNAHGWEETLVNEYVHHLAYRIVRDRILKKQPRIDGRDTKTVRPITIHTSVLPRAHGSALFTRGETQALVVATLGTGRDAQLLDTLDGEVRDNFMLHYNFLPFSVGEIGRIGSPKRREIGHGRLARRGLSAVLPLEEDFPYTIRVVSEITESNGSSSMASVCGSSLALMDAGVPVQTPVAGIAMGLIKEGDEFAILTDILGDEDHLGDMDFKVAGSATGVTALQMDIKINGITEEIMRQALSQAHEGRLHILEVMNQAIAAPRAELSDYAPRFSSMRIDTEKIKDVIGKGGATIRSITEQTGTTIEIEDDGSVKIAATDKAAAANARRLIEEIVAEPEIGRIYDAKVTKITDFGAFLQFLPGKEGLVHISQIADYRVNDVRDELTEGQEVKVKLLEIDRQGRVRLSIKEAK.

Mg(2+) contacts are provided by Asp486 and Asp492. One can recognise a KH domain in the interval 553 to 612 (PRFSSMRIDTEKIKDVIGKGGATIRSITEQTGTTIEIEDDGSVKIAATDKAAAANARRLI). The 69-residue stretch at 622–690 (GRIYDAKVTK…RQGRVRLSIK (69 aa)) folds into the S1 motif domain.

It belongs to the polyribonucleotide nucleotidyltransferase family. In terms of assembly, component of the RNA degradosome, which is a multiprotein complex involved in RNA processing and mRNA degradation. Requires Mg(2+) as cofactor.

It is found in the cytoplasm. It catalyses the reaction RNA(n+1) + phosphate = RNA(n) + a ribonucleoside 5'-diphosphate. In terms of biological role, involved in mRNA degradation. Catalyzes the phosphorolysis of single-stranded polyribonucleotides processively in the 3'- to 5'-direction. The sequence is that of Polyribonucleotide nucleotidyltransferase from Dichelobacter nodosus (strain VCS1703A).